Consider the following 255-residue polypeptide: MRRIYLNTYEQINKVKKILRKHLKNNLIGTYMFGSGVESGLKPNSDLDFLVVVSEPLTDQSKEILIQKIRPISKKIGDKSNLRYIELTIIIQQEMVPWNHPPKQEFIYGEWLQELYEQGYIPQKELNSDLTIMLYQAKRKNKRIYGNYDLEELLPDIPFSDVRRAIMDSSEELIDNYQDDETNSILTLCRMILTMDTGKIIPKDIAGNAVAESSPLEHRERILLAVRSYLGENIEWTNENVNLTINYLNNRLKKL.

It carries out the reaction spectinomycin + ATP = 9-O-adenylylspectinomycin + diphosphate. In terms of biological role, mediates bacterial resistance to the antibiotic spectinomycin but not streptomycin. The chain is Spectinomycin 9-adenylyltransferase from Enterococcus faecalis (Streptococcus faecalis).